The following is a 189-amino-acid chain: UPF0398 protein LVIS_0849 (189 aa).

The protein belongs to the UPF0398 family.

The polypeptide is UPF0398 protein LVIS_0849 (Levilactobacillus brevis (strain ATCC 367 / BCRC 12310 / CIP 105137 / JCM 1170 / LMG 11437 / NCIMB 947 / NCTC 947) (Lactobacillus brevis)).